The sequence spans 373 residues: Cell surface Cu-only superoxide dismutase ARB_03674 (373 aa).

An N-terminal signal peptide occupies residues 1–55 (MIWKQPPRRMGEMGGSLSRRFGNAAASWAVWRVSRSCFSLLFFFYFFLFFSSSSL). N-linked (GlcNAc...) asparagine glycosylation is found at asparagine 75 and asparagine 141. Positions 194, 196, and 212 each coordinate Cu cation. Cysteines 206 and 289 form a disulfide. Asparagine 254 and asparagine 274 each carry an N-linked (GlcNAc...) asparagine glycan. Histidine 280 provides a ligand contact to Cu cation. Residues asparagine 283 and asparagine 291 are each glycosylated (N-linked (GlcNAc...) asparagine). A disordered region spans residues 329–348 (GHAPTISATYTPTPTPSPPA). Low complexity predominate over residues 331 to 340 (APTISATYTP). Glycine 352 carries GPI-anchor amidated glycine lipidation. Positions 353–373 (AGRLVGFSLGAIMAALVPLAL) are cleaved as a propeptide — removed in mature form.

Belongs to the Cu-Zn superoxide dismutase family. Monomer. Cu cation serves as cofactor. Post-translationally, the GPI-anchor is attached to the protein in the endoplasmic reticulum and serves to target the protein to the cell surface. There, the glucosamine-inositol phospholipid moiety is cleaved off and the GPI-modified mannoprotein is covalently attached via its lipidless GPI glycan remnant to the 1,6-beta-glucan of the outer cell wall layer.

It localises to the secreted. The protein resides in the cell wall. It is found in the cell membrane. It carries out the reaction 2 superoxide + 2 H(+) = H2O2 + O2. Its function is as follows. Superoxide dismutases serve to convert damaging superoxide radicals, a key form of ROS, to less damaging hydrogen peroxide that can be converted into water by catalase action. Degrades host-derived reactive oxygen species to escape innate immune surveillance. Involved in the occurrence of miconazole-tolerant persisters in biofilms. Persisters are cells that survive high doses of an antimicrobial agent. The unusual attributes of SOD5-like fungal proteins, including the absence of zinc and an open active site that readily captures extracellular copper, make these SODs well suited to meet challenges in zinc and copper availability at the host-pathogen interface. The sequence is that of Cell surface Cu-only superoxide dismutase ARB_03674 from Arthroderma benhamiae (strain ATCC MYA-4681 / CBS 112371) (Trichophyton mentagrophytes).